Reading from the N-terminus, the 183-residue chain is ATP synthase subunit delta (183 aa).

Belongs to the ATPase delta chain family. In terms of assembly, F-type ATPases have 2 components, F(1) - the catalytic core - and F(0) - the membrane proton channel. F(1) has five subunits: alpha(3), beta(3), gamma(1), delta(1), epsilon(1). F(0) has three main subunits: a(1), b(2) and c(10-14). The alpha and beta chains form an alternating ring which encloses part of the gamma chain. F(1) is attached to F(0) by a central stalk formed by the gamma and epsilon chains, while a peripheral stalk is formed by the delta and b chains.

It is found in the cell inner membrane. F(1)F(0) ATP synthase produces ATP from ADP in the presence of a proton or sodium gradient. F-type ATPases consist of two structural domains, F(1) containing the extramembraneous catalytic core and F(0) containing the membrane proton channel, linked together by a central stalk and a peripheral stalk. During catalysis, ATP synthesis in the catalytic domain of F(1) is coupled via a rotary mechanism of the central stalk subunits to proton translocation. Functionally, this protein is part of the stalk that links CF(0) to CF(1). It either transmits conformational changes from CF(0) to CF(1) or is implicated in proton conduction. This is ATP synthase subunit delta from Thermotoga neapolitana (strain ATCC 49049 / DSM 4359 / NBRC 107923 / NS-E).